Here is a 158-residue protein sequence, read N- to C-terminus: Ribosome maturation factor RimP (158 aa).

The protein belongs to the RimP family.

It localises to the cytoplasm. Required for maturation of 30S ribosomal subunits. This is Ribosome maturation factor RimP from Lactobacillus acidophilus (strain ATCC 700396 / NCK56 / N2 / NCFM).